Consider the following 94-residue polypeptide: Large ribosomal subunit protein bL25 (94 aa).

This sequence belongs to the bacterial ribosomal protein bL25 family. As to quaternary structure, part of the 50S ribosomal subunit; part of the 5S rRNA/L5/L18/L25 subcomplex. Contacts the 5S rRNA. Binds to the 5S rRNA independently of L5 and L18.

In terms of biological role, this is one of the proteins that binds to the 5S RNA in the ribosome where it forms part of the central protuberance. The protein is Large ribosomal subunit protein bL25 of Serratia proteamaculans (strain 568).